The primary structure comprises 437 residues: Putrescine hydroxycinnamoyltransferase 3 (437 aa).

Residues H151 and D383 each act as proton acceptor in the active site.

This sequence belongs to the plant acyltransferase family. Highly expressed in roots. Expressed at low levels in shoots and flowers.

In terms of biological role, hydroxycinnamoyl transferase that catalyzes the transfer of an acyl from p-coumaryol-CoA to putrescine, to produce coumaroyl putrescine. Can use feruloyl-CoA and caffeoyl-CoA as acyl donors. This is Putrescine hydroxycinnamoyltransferase 3 from Oryza sativa subsp. japonica (Rice).